The primary structure comprises 54 residues: Large ribosomal subunit protein bL33A (54 aa).

Belongs to the bacterial ribosomal protein bL33 family.

This Mycolicibacterium paratuberculosis (strain ATCC BAA-968 / K-10) (Mycobacterium paratuberculosis) protein is Large ribosomal subunit protein bL33A.